Reading from the N-terminus, the 172-residue chain is 3-hydroxydecanoyl-[acyl-carrier-protein] dehydratase (172 aa).

His-70 is an active-site residue.

The protein belongs to the thioester dehydratase family. FabA subfamily. Homodimer.

Its subcellular location is the cytoplasm. It catalyses the reaction a (3R)-hydroxyacyl-[ACP] = a (2E)-enoyl-[ACP] + H2O. The catalysed reaction is (3R)-hydroxydecanoyl-[ACP] = (2E)-decenoyl-[ACP] + H2O. It carries out the reaction (2E)-decenoyl-[ACP] = (3Z)-decenoyl-[ACP]. The protein operates within lipid metabolism; fatty acid biosynthesis. Its function is as follows. Necessary for the introduction of cis unsaturation into fatty acids. Catalyzes the dehydration of (3R)-3-hydroxydecanoyl-ACP to E-(2)-decenoyl-ACP and then its isomerization to Z-(3)-decenoyl-ACP. Can catalyze the dehydratase reaction for beta-hydroxyacyl-ACPs with saturated chain lengths up to 16:0, being most active on intermediate chain length. The sequence is that of 3-hydroxydecanoyl-[acyl-carrier-protein] dehydratase from Xylella fastidiosa (strain M12).